The primary structure comprises 295 residues: Protoheme IX farnesyltransferase 2 (295 aa).

The next 9 helical transmembrane spans lie at 9 to 29, 36 to 56, 83 to 103, 108 to 128, 135 to 155, 163 to 183, 209 to 229, 230 to 250, and 264 to 284; these read ITKP…FFLA, FALF…GCVF, LPLA…LLYV, LSAF…SLWL, GTLV…CAVS, VTLL…IAIF, IVLY…GGYA, GLGY…MAWG, and VFGF…VDSQ.

It belongs to the UbiA prenyltransferase family. Protoheme IX farnesyltransferase subfamily.

It is found in the cell inner membrane. The catalysed reaction is heme b + (2E,6E)-farnesyl diphosphate + H2O = Fe(II)-heme o + diphosphate. It functions in the pathway porphyrin-containing compound metabolism; heme O biosynthesis; heme O from protoheme: step 1/1. Its function is as follows. Converts heme B (protoheme IX) to heme O by substitution of the vinyl group on carbon 2 of heme B porphyrin ring with a hydroxyethyl farnesyl side group. In Pseudomonas putida (strain GB-1), this protein is Protoheme IX farnesyltransferase 2.